Consider the following 395-residue polypeptide: NAD(P)H-quinone oxidoreductase subunit H, chloroplastic (395 aa).

This sequence belongs to the complex I 49 kDa subunit family. As to quaternary structure, NDH is composed of at least 16 different subunits, 5 of which are encoded in the nucleus.

The protein localises to the plastid. Its subcellular location is the chloroplast thylakoid membrane. It carries out the reaction a plastoquinone + NADH + (n+1) H(+)(in) = a plastoquinol + NAD(+) + n H(+)(out). The enzyme catalyses a plastoquinone + NADPH + (n+1) H(+)(in) = a plastoquinol + NADP(+) + n H(+)(out). Its function is as follows. NDH shuttles electrons from NAD(P)H:plastoquinone, via FMN and iron-sulfur (Fe-S) centers, to quinones in the photosynthetic chain and possibly in a chloroplast respiratory chain. The immediate electron acceptor for the enzyme in this species is believed to be plastoquinone. Couples the redox reaction to proton translocation, and thus conserves the redox energy in a proton gradient. This is NAD(P)H-quinone oxidoreductase subunit H, chloroplastic from Coffea arabica (Arabian coffee).